The primary structure comprises 258 residues: Imidazole glycerol phosphate synthase subunit HisF (258 aa).

Residues Asp11 and Asp130 contribute to the active site.

This sequence belongs to the HisA/HisF family. As to quaternary structure, heterodimer of HisH and HisF.

It is found in the cytoplasm. The catalysed reaction is 5-[(5-phospho-1-deoxy-D-ribulos-1-ylimino)methylamino]-1-(5-phospho-beta-D-ribosyl)imidazole-4-carboxamide + L-glutamine = D-erythro-1-(imidazol-4-yl)glycerol 3-phosphate + 5-amino-1-(5-phospho-beta-D-ribosyl)imidazole-4-carboxamide + L-glutamate + H(+). The protein operates within amino-acid biosynthesis; L-histidine biosynthesis; L-histidine from 5-phospho-alpha-D-ribose 1-diphosphate: step 5/9. Its function is as follows. IGPS catalyzes the conversion of PRFAR and glutamine to IGP, AICAR and glutamate. The HisF subunit catalyzes the cyclization activity that produces IGP and AICAR from PRFAR using the ammonia provided by the HisH subunit. In Haemophilus influenzae (strain 86-028NP), this protein is Imidazole glycerol phosphate synthase subunit HisF.